Here is a 387-residue protein sequence, read N- to C-terminus: UPF0400 protein C337.03 (387 aa).

Positions 1–133 (MALTPDTVSS…SLQERFNNAE (133 aa)) constitute a CID domain. The stretch at 177-255 (KSYLEKQSDY…IISNLENKES (79 aa)) forms a coiled coil. The interval 257-387 (TATSTLTDAG…SSAAGLYGDS (131 aa)) is disordered. The span at 283-297 (SPPSSSPNSDDAYSP) shows a compositional bias: low complexity. Positions 298–323 (QVDSYSPSINSVPYTSNIVENPSEDN) are enriched in polar residues. Acidic residues predominate over residues 353 to 365 (NEEESKELPEDSD). The segment covering 370–379 (DSSPSSDDSS) has biased composition (low complexity). Phosphoserine is present on Ser-372.

It belongs to the UPF0400 (RTT103) family.

The sequence is that of UPF0400 protein C337.03 from Schizosaccharomyces pombe (strain 972 / ATCC 24843) (Fission yeast).